An 817-amino-acid chain; its full sequence is Probable inorganic carbon transporter subunit DabA (817 aa).

Residues Cys-301, Asp-303, His-491, and Cys-506 each contribute to the Zn(2+) site. Disordered stretches follow at residues 598-617 (NTSV…ERRA) and 794-817 (GWHA…GVPS).

The protein belongs to the inorganic carbon transporter (TC 9.A.2) DabA family. In terms of assembly, forms a complex with DabB. The cofactor is Zn(2+).

The protein localises to the cell inner membrane. Functionally, part of an energy-coupled inorganic carbon pump. The polypeptide is Probable inorganic carbon transporter subunit DabA (Salinibacter ruber (strain DSM 13855 / M31)).